Here is a 246-residue protein sequence, read N- to C-terminus: Histone H1 (246 aa).

2 disordered regions span residues 1-51 and 105-246; these read MATD…PTHL and GGKL…KAKK. The segment covering 9-34 has biased composition (low complexity); sequence PAPLVDAAPEAPADAPAAPAADANAA. Over residues 35-47 the composition is skewed to basic residues; it reads KAKKATAPKKRAS. Residues 49–119 form the H15 domain; the sequence is THLPYAEMVS…KVKNSYKLSS (71 aa). Basic residues-rich tracts occupy residues 129-189 and 198-208; these read AAPK…KAKP and PLAKKAGRAKA. The segment covering 224-235 has biased composition (low complexity); the sequence is KKAAPSKKAATP.

The protein belongs to the histone H1/H5 family.

The protein localises to the nucleus. The protein resides in the chromosome. Functionally, histones H1 are necessary for the condensation of nucleosome chains into higher-order structures. The polypeptide is Histone H1 (Zea mays (Maize)).